A 156-amino-acid polypeptide reads, in one-letter code: Ribosomal RNA large subunit methyltransferase H (156 aa).

S-adenosyl-L-methionine contacts are provided by residues leucine 73, glycine 104, and 123–128 (ISSMTL).

It belongs to the RNA methyltransferase RlmH family. Homodimer.

It localises to the cytoplasm. It catalyses the reaction pseudouridine(1915) in 23S rRNA + S-adenosyl-L-methionine = N(3)-methylpseudouridine(1915) in 23S rRNA + S-adenosyl-L-homocysteine + H(+). In terms of biological role, specifically methylates the pseudouridine at position 1915 (m3Psi1915) in 23S rRNA. The sequence is that of Ribosomal RNA large subunit methyltransferase H from Burkholderia ambifaria (strain MC40-6).